The following is a 466-amino-acid chain: Ribosomal protein uS12 methylthiotransferase RimO (466 aa).

One can recognise an MTTase N-terminal domain in the interval 15-125 (PKVGFVSLGC…VMEAVHAALP (111 aa)). [4Fe-4S] cluster contacts are provided by Cys-24, Cys-60, Cys-89, Cys-156, Cys-160, and Cys-163. Positions 142–380 (LTPRHYAYLK…AKQAEISALR (239 aa)) constitute a Radical SAM core domain. Residues 382-450 (EAKIGSVQQC…EHDLFGDALP (69 aa)) form the TRAM domain.

It belongs to the methylthiotransferase family. RimO subfamily. The cofactor is [4Fe-4S] cluster.

It is found in the cytoplasm. It carries out the reaction L-aspartate(89)-[ribosomal protein uS12]-hydrogen + (sulfur carrier)-SH + AH2 + 2 S-adenosyl-L-methionine = 3-methylsulfanyl-L-aspartate(89)-[ribosomal protein uS12]-hydrogen + (sulfur carrier)-H + 5'-deoxyadenosine + L-methionine + A + S-adenosyl-L-homocysteine + 2 H(+). Catalyzes the methylthiolation of an aspartic acid residue of ribosomal protein uS12. This Xanthomonas oryzae pv. oryzae (strain MAFF 311018) protein is Ribosomal protein uS12 methylthiotransferase RimO.